The primary structure comprises 506 residues: MCKLNIFDPVQNYENLNQQLNLRRNKLNNLRKQGKTFTNNFKRNVISNQLFLQYGEKNNETLKTLNIQVSLAGRMINRRIMGKASFVILQDSGGTIQLYLSSKNLSDSFYNEHFKKWDLGDILGVHGRLFKTKTGELTINCNEIILLTKALRPIPNKFHGIVDKQIRYRQRYLDLITNKNSFNLFKTRSQIITEIRQFLNKEDFIEVETPILQSLPGGATARPFITYHNALDMNLYLRIAPELYLKQLIIGGFEKIFEINRNFRNEGLSAHHNPEFTMMELYIAYADYHDVMLLTQNLLNTITNHVLGTNIIQYGNLKLDFSKNFVKMTMKEAICHYNKQILSKHLDDKMQAITCAKNIGIHIDQKWGLGRIQTEIFEKTTEKHLLQPTFITSYPIEVSPLARRNDNNPFFADRFELFIGGYEIGNGFSELNDYEDQANRLIEQATIKNSGDNESMFYDEDYIIALEHGLPPTAGLGIGIDRLVMLLTNSHFIRDVILFPTMRLKI.

The Mg(2+) site is built by Glu416 and Glu423.

Belongs to the class-II aminoacyl-tRNA synthetase family. Homodimer. It depends on Mg(2+) as a cofactor.

The protein resides in the cytoplasm. The catalysed reaction is tRNA(Lys) + L-lysine + ATP = L-lysyl-tRNA(Lys) + AMP + diphosphate. This Baumannia cicadellinicola subsp. Homalodisca coagulata protein is Lysine--tRNA ligase.